The following is a 240-amino-acid chain: Pyridoxine 5'-phosphate synthase (240 aa).

Asparagine 7 is a binding site for 3-amino-2-oxopropyl phosphate. 1-deoxy-D-xylulose 5-phosphate is bound at residue 9-10 (DH). Arginine 18 contacts 3-amino-2-oxopropyl phosphate. Histidine 43 serves as the catalytic Proton acceptor. 2 residues coordinate 1-deoxy-D-xylulose 5-phosphate: arginine 45 and histidine 50. Glutamate 70 acts as the Proton acceptor in catalysis. Threonine 100 serves as a coordination point for 1-deoxy-D-xylulose 5-phosphate. Residue histidine 191 is the Proton donor of the active site. Residues glycine 192 and 213-214 (GH) each bind 3-amino-2-oxopropyl phosphate.

The protein belongs to the PNP synthase family. In terms of assembly, homooctamer; tetramer of dimers.

It localises to the cytoplasm. The catalysed reaction is 3-amino-2-oxopropyl phosphate + 1-deoxy-D-xylulose 5-phosphate = pyridoxine 5'-phosphate + phosphate + 2 H2O + H(+). It functions in the pathway cofactor biosynthesis; pyridoxine 5'-phosphate biosynthesis; pyridoxine 5'-phosphate from D-erythrose 4-phosphate: step 5/5. In terms of biological role, catalyzes the complicated ring closure reaction between the two acyclic compounds 1-deoxy-D-xylulose-5-phosphate (DXP) and 3-amino-2-oxopropyl phosphate (1-amino-acetone-3-phosphate or AAP) to form pyridoxine 5'-phosphate (PNP) and inorganic phosphate. This chain is Pyridoxine 5'-phosphate synthase, found in Trichodesmium erythraeum (strain IMS101).